The sequence spans 399 residues: MNIHEYQAKELLAKFGVAVPAGHAALTVDEAVEAAKKLPGPIWVVKAQIHAGGRGKGKFKELPADAKGGVRLSKSIDEVKANAADMLGNTLVTIQTGEAGKQVNRLYVTDGADIKSEYYLSMLVDRKTGRIAMIVSTEGGMDIEQVAHDTPEKIRTIVIDPAEGFQPHHGRAVAFALKLKGDLNKQAVKLAEQLYNAFIATDMSMLEVNPLVETTDGKLLVLDAKVSFDSNALYRHPDILALRDETEEDPAEIEASQYDLAYIKLDGDIGCMVNGAGLAMATMDIIKLNGMFPANFLDVGGGATKEKVTAAFKIILSDPAVKGILVNIFGGIMRCDIIAEGIIAAAKEVNLSVPLVVRLEGTNVQQGKDLLAGSGLPIVAADDLGDAARKIVAEVKKAA.

The 246-residue stretch at 9-254 (KELLAKFGVA…ETEEDPAEIE (246 aa)) folds into the ATP-grasp domain. Residues K46, 53-55 (GRG), A112, and E117 contribute to the ATP site. N209 and D223 together coordinate Mg(2+). Substrate contacts are provided by residues N274 and 331 to 333 (GIM).

This sequence belongs to the succinate/malate CoA ligase beta subunit family. In terms of assembly, heterotetramer of two alpha and two beta subunits. Requires Mg(2+) as cofactor.

The catalysed reaction is succinate + ATP + CoA = succinyl-CoA + ADP + phosphate. The enzyme catalyses GTP + succinate + CoA = succinyl-CoA + GDP + phosphate. It participates in carbohydrate metabolism; tricarboxylic acid cycle; succinate from succinyl-CoA (ligase route): step 1/1. Succinyl-CoA synthetase functions in the citric acid cycle (TCA), coupling the hydrolysis of succinyl-CoA to the synthesis of either ATP or GTP and thus represents the only step of substrate-level phosphorylation in the TCA. The beta subunit provides nucleotide specificity of the enzyme and binds the substrate succinate, while the binding sites for coenzyme A and phosphate are found in the alpha subunit. The polypeptide is Succinate--CoA ligase [ADP-forming] subunit beta (Rhizorhabdus wittichii (strain DSM 6014 / CCUG 31198 / JCM 15750 / NBRC 105917 / EY 4224 / RW1) (Sphingomonas wittichii)).